Here is a 172-residue protein sequence, read N- to C-terminus: Trypsin inhibitor DE-3 (172 aa).

2 disulfides stabilise this stretch: Cys-39–Cys-83 and Cys-132–Cys-139.

It belongs to the protease inhibitor I3 (leguminous Kunitz-type inhibitor) family.

In terms of biological role, inhibition of trypsin. In Erythrina latissima (Broad-leaved coral tree), this protein is Trypsin inhibitor DE-3.